A 345-amino-acid polypeptide reads, in one-letter code: Biotin synthase (345 aa).

Residues 67–295 (YKVQLASLLS…KSRIRLSAGR (229 aa)) form the Radical SAM core domain. 3 residues coordinate [4Fe-4S] cluster: Cys-82, Cys-86, and Cys-89. Residues Cys-126, Cys-158, Cys-218, and Arg-290 each coordinate [2Fe-2S] cluster.

This sequence belongs to the radical SAM superfamily. Biotin synthase family. As to quaternary structure, homodimer. [4Fe-4S] cluster is required as a cofactor. Requires [2Fe-2S] cluster as cofactor.

The enzyme catalyses (4R,5S)-dethiobiotin + (sulfur carrier)-SH + 2 reduced [2Fe-2S]-[ferredoxin] + 2 S-adenosyl-L-methionine = (sulfur carrier)-H + biotin + 2 5'-deoxyadenosine + 2 L-methionine + 2 oxidized [2Fe-2S]-[ferredoxin]. Its pathway is cofactor biosynthesis; biotin biosynthesis; biotin from 7,8-diaminononanoate: step 2/2. Functionally, catalyzes the conversion of dethiobiotin (DTB) to biotin by the insertion of a sulfur atom into dethiobiotin via a radical-based mechanism. This is Biotin synthase from Prochlorococcus marinus (strain NATL2A).